A 375-amino-acid chain; its full sequence is Probable neutral protease 2 homolog ARB_05817 (375 aa).

The signal sequence occupies residues 1–19; the sequence is MQVIVALAALGSLAAPALG. Residues 20–189 constitute a propeptide that is removed on maturation; that stretch reads FSIPRGVPVS…RGPLTRINKR (170 aa). Cystine bridges form between Cys-197-Cys-267 and Cys-274-Cys-292. Residue His-317 coordinates Zn(2+). The active site involves Glu-318. The Zn(2+) site is built by His-321 and Asp-332.

Belongs to the peptidase M35 family. It depends on Zn(2+) as a cofactor.

The protein localises to the secreted. It carries out the reaction Preferential cleavage of bonds with hydrophobic residues in P1'. Also 3-Asn-|-Gln-4 and 8-Gly-|-Ser-9 bonds in insulin B chain.. Its function is as follows. Probable secreted metalloprotease that shows high activities on basic nuclear substrates such as histone and protamine. May be involved in virulence. The protein is Probable neutral protease 2 homolog ARB_05817 of Arthroderma benhamiae (strain ATCC MYA-4681 / CBS 112371) (Trichophyton mentagrophytes).